An 81-amino-acid polypeptide reads, in one-letter code: Large ribosomal subunit protein bL31B (81 aa).

This sequence belongs to the bacterial ribosomal protein bL31 family. Type B subfamily. As to quaternary structure, part of the 50S ribosomal subunit.

The protein is Large ribosomal subunit protein bL31B of Oceanobacillus iheyensis (strain DSM 14371 / CIP 107618 / JCM 11309 / KCTC 3954 / HTE831).